A 669-amino-acid polypeptide reads, in one-letter code: Very long-chain fatty acid transport protein (669 aa).

Topologically, residues 1 to 5 are cytoplasmic; sequence MSPIQ. A helical membrane pass occupies residues 6–26; that stretch reads VVVFALSRIFLLLFRLIKLII. The Extracellular portion of the chain corresponds to 27 to 148; sequence TPIQKSLGYL…YVAIDCTNKP (122 aa). A helical transmembrane segment spans residues 149-169; the sequence is LFVFLWLSLWNIGAIPAFLNY. The Cytoplasmic portion of the chain corresponds to 170 to 270; that stretch reads NTKGTPLVHS…TGLPKSAIMS (101 aa). 256–267 contributes to the ATP binding site; the sequence is YTSGTTGLPKSA. The stretch at 271–339 is an intramembrane region; sequence WRKSSVGCQV…FWKQVYLTGA (69 aa). At 340–669 the chain is on the cytoplasmic side; the sequence is THIQYVGEVC…EAIDAQTIKL (330 aa). The short motif at 501 to 551 is the FACS element; it reads DAWYRCGDLLKADEYGLWYFLDRMGDTFRWKSENVSTTEVEDQLTASNKEQ. Positions 667 to 669 match the C-terminal peroxisome targeting signal (PTS1) motif; sequence IKL.

The protein belongs to the ATP-dependent AMP-binding enzyme family. As to quaternary structure, interacts with fatty acyl-CoA synthetases FAA1 and FAA4.

Its subcellular location is the lipid droplet. It is found in the cell membrane. The protein localises to the peroxisome membrane. It localises to the peroxisome. The enzyme catalyses a very long-chain fatty acid + ATP + CoA = a very long-chain fatty acyl-CoA + AMP + diphosphate. It catalyses the reaction tetracosanoate + ATP + CoA = tetracosanoyl-CoA + AMP + diphosphate. In terms of biological role, acyl-CoA synthetase required for both the import of long chain fatty acids (LCFAs) (C14-C18) and the activation very long chain fatty acids (VLCFAs) (C20-C26) by esterification of the fatty acids into metabolically active CoA-thioesters for subsequent degradation or incorporation into phospholipids. The transport and fatty acyl-CoA synthetase activities are genetically separable and are thus independent activities. Esterifies VLCFAs in the peroxisome matrix. The VLCFAs are actively transported into peroxisomes by a PXA1-PXA2 heterodimeric transporter in the peroxisomal membrane. The chain is Very long-chain fatty acid transport protein (FAT1) from Saccharomyces cerevisiae (strain ATCC 204508 / S288c) (Baker's yeast).